Here is a 107-residue protein sequence, read N- to C-terminus: Iron-binding protein IscA (107 aa).

3 residues coordinate Fe cation: cysteine 35, cysteine 99, and cysteine 101.

It belongs to the HesB/IscA family. Homodimer; may form tetramers and higher multimers. Fe cation is required as a cofactor.

In terms of biological role, is able to transfer iron-sulfur clusters to apo-ferredoxin. Multiple cycles of [2Fe2S] cluster formation and transfer are observed, suggesting that IscA acts catalytically. Recruits intracellular free iron so as to provide iron for the assembly of transient iron-sulfur cluster in IscU in the presence of IscS, L-cysteine and the thioredoxin reductase system TrxA/TrxB. The polypeptide is Iron-binding protein IscA (Cronobacter sakazakii (strain ATCC BAA-894) (Enterobacter sakazakii)).